The following is a 330-amino-acid chain: Holliday junction branch migration complex subunit RuvB (330 aa).

The segment at 1-181 (MEDRLVGCRL…FGVINKLELY (181 aa)) is large ATPase domain (RuvB-L). Residues Leu-20, Arg-21, Gly-62, Lys-65, Thr-66, Thr-67, 128–130 (EDY), Arg-171, Tyr-181, and Arg-218 contribute to the ATP site. Thr-66 provides a ligand contact to Mg(2+). The segment at 182 to 252 (SVEELGQIVK…IARTGLEALE (71 aa)) is small ATPAse domain (RuvB-S). Residues 255–330 (EIGLDAVDRN…AYEHFGLKYE (76 aa)) form a head domain (RuvB-H) region. The DNA site is built by Lys-310 and Arg-315.

It belongs to the RuvB family. As to quaternary structure, homohexamer. Forms an RuvA(8)-RuvB(12)-Holliday junction (HJ) complex. HJ DNA is sandwiched between 2 RuvA tetramers; dsDNA enters through RuvA and exits via RuvB. An RuvB hexamer assembles on each DNA strand where it exits the tetramer. Each RuvB hexamer is contacted by two RuvA subunits (via domain III) on 2 adjacent RuvB subunits; this complex drives branch migration. In the full resolvosome a probable DNA-RuvA(4)-RuvB(12)-RuvC(2) complex forms which resolves the HJ.

It localises to the cytoplasm. The catalysed reaction is ATP + H2O = ADP + phosphate + H(+). The RuvA-RuvB-RuvC complex processes Holliday junction (HJ) DNA during genetic recombination and DNA repair, while the RuvA-RuvB complex plays an important role in the rescue of blocked DNA replication forks via replication fork reversal (RFR). RuvA specifically binds to HJ cruciform DNA, conferring on it an open structure. The RuvB hexamer acts as an ATP-dependent pump, pulling dsDNA into and through the RuvAB complex. RuvB forms 2 homohexamers on either side of HJ DNA bound by 1 or 2 RuvA tetramers; 4 subunits per hexamer contact DNA at a time. Coordinated motions by a converter formed by DNA-disengaged RuvB subunits stimulates ATP hydrolysis and nucleotide exchange. Immobilization of the converter enables RuvB to convert the ATP-contained energy into a lever motion, pulling 2 nucleotides of DNA out of the RuvA tetramer per ATP hydrolyzed, thus driving DNA branch migration. The RuvB motors rotate together with the DNA substrate, which together with the progressing nucleotide cycle form the mechanistic basis for DNA recombination by continuous HJ branch migration. Branch migration allows RuvC to scan DNA until it finds its consensus sequence, where it cleaves and resolves cruciform DNA. The protein is Holliday junction branch migration complex subunit RuvB of Acetivibrio thermocellus (strain ATCC 27405 / DSM 1237 / JCM 9322 / NBRC 103400 / NCIMB 10682 / NRRL B-4536 / VPI 7372) (Clostridium thermocellum).